We begin with the raw amino-acid sequence, 220 residues long: uncharacterized protein (220 aa).

Positions 165–202 (DKYEDLISDYNKIMEKYREVIKSEIEKYKALSKRKNDI) form a coiled coil.

This is an uncharacterized protein from Pasteurella multocida (strain Pm70).